Consider the following 195-residue polypeptide: 7-methyl-GTP pyrophosphatase (195 aa).

The active-site Proton acceptor is the D71.

It belongs to the Maf family. YceF subfamily. The cofactor is a divalent metal cation.

It localises to the cytoplasm. It carries out the reaction N(7)-methyl-GTP + H2O = N(7)-methyl-GMP + diphosphate + H(+). In terms of biological role, nucleoside triphosphate pyrophosphatase that hydrolyzes 7-methyl-GTP (m(7)GTP). May have a dual role in cell division arrest and in preventing the incorporation of modified nucleotides into cellular nucleic acids. The chain is 7-methyl-GTP pyrophosphatase from Shewanella oneidensis (strain ATCC 700550 / JCM 31522 / CIP 106686 / LMG 19005 / NCIMB 14063 / MR-1).